Here is a 455-residue protein sequence, read N- to C-terminus: Killer cell immunoglobulin-like receptor 3DL2 (455 aa).

The signal sequence occupies residues 1 to 21; the sequence is MSLTVVSMACVGFFLLQGAWP. Residues 22-340 lie on the Extracellular side of the membrane; sequence LMGGQDKPFL…SKSGICRHLH (319 aa). 3 consecutive Ig-like C2-type domains span residues 42-102, 137-202, and 237-300; these read GGHV…RPHS, GETV…VPHS, and GENV…FRAL. 2 disulfide bridges follow: C49–C95 and C144–C195. N-linked (GlcNAc...) asparagine glycans are attached at residues N179, N239, N273, and N306. C244 and C293 are joined by a disulfide. The helical transmembrane segment at 341 to 360 threads the bilayer; the sequence is VLIGTSVVIFLFILLLFFLL. Topologically, residues 361 to 455 are cytoplasmic; it reads YRWCSNKKNA…APQSGLEGVF (95 aa).

It belongs to the immunoglobulin superfamily. Interacts with peptide-free HLA-F open conformer. Expressed in astrocytes.

Its subcellular location is the cell membrane. Functionally, receptor on natural killer (NK) cells and T cells for MHC class I molecules. Upon binding of peptide-free HLA-F open conformer, negatively regulates NK and T cell effector functions. Acts as a receptor on astrocytes for HLA-F. Through interaction with HLA-F, may protect motor neurons from astrocyte-induced toxicity. The chain is Killer cell immunoglobulin-like receptor 3DL2 from Homo sapiens (Human).